Consider the following 497-residue polypeptide: tRNA-2-methylthio-N(6)-dimethylallyladenosine synthase (497 aa).

Basic and acidic residues predominate over residues 1-10 (MTLLDSDSRQ). Positions 1–26 (MTLLDSDSRQSAEVLPAAGPAPDRPR) are disordered. Residues 26–142 (RTYQVRTFGC…LPVLLERARI (117 aa)) form the MTTase N-terminal domain. Positions 35, 71, 105, 179, 183, and 186 each coordinate [4Fe-4S] cluster. One can recognise a Radical SAM core domain in the interval 165 to 395 (RESVYAAWVA…VALVEQIALE (231 aa)). The TRAM domain occupies 398 to 464 (QAQVGRVVEV…PHCLIADQVL (67 aa)).

The protein belongs to the methylthiotransferase family. MiaB subfamily. As to quaternary structure, monomer. It depends on [4Fe-4S] cluster as a cofactor.

It is found in the cytoplasm. The enzyme catalyses N(6)-dimethylallyladenosine(37) in tRNA + (sulfur carrier)-SH + AH2 + 2 S-adenosyl-L-methionine = 2-methylsulfanyl-N(6)-dimethylallyladenosine(37) in tRNA + (sulfur carrier)-H + 5'-deoxyadenosine + L-methionine + A + S-adenosyl-L-homocysteine + 2 H(+). Functionally, catalyzes the methylthiolation of N6-(dimethylallyl)adenosine (i(6)A), leading to the formation of 2-methylthio-N6-(dimethylallyl)adenosine (ms(2)i(6)A) at position 37 in tRNAs that read codons beginning with uridine. This is tRNA-2-methylthio-N(6)-dimethylallyladenosine synthase from Acidothermus cellulolyticus (strain ATCC 43068 / DSM 8971 / 11B).